Reading from the N-terminus, the 427-residue chain is MKVEVKKIDDANVAVQGNIENKVVEANVDKLAREAGKQMKVDGFRKGKVPPHVVKKLHGDKLQQDAEGDALRSLIDLGVKEAGINTADILGEPIFKKYDKKDEGIEVEVEISLRPTIEAEGYEKAVPAFEKPEATEKEVEEKLEEIAAQQAPFEKIKRKRMVRDGDTVVIDFEGFVDGVAFEGGKAEKFSLKIGSGQFIPGFEEQIIGMKYDEEKTITVAFPEEYQSKELAGKEAEFKVKLHEIQEQVPAELNDALAQKLLQDEKATLDTLKEKLKEQIVNEKTSKIYNEELKPKIIEALVAHFDFALPNNIVEQEIDAKINAKAREMSEEELNDFKENPEKVEALREELREEAENSVKATFIVDALAKKEDVNVDDQEVSQAIYYEAMMSGQDPQQVIEYYQKNNLLPAVKMGMIEDKLFGKLLGL.

Residues 165 to 250 (GDTVVIDFEG…LHEIQEQVPA (86 aa)) enclose the PPIase FKBP-type domain.

Belongs to the FKBP-type PPIase family. Tig subfamily.

Its subcellular location is the cytoplasm. The enzyme catalyses [protein]-peptidylproline (omega=180) = [protein]-peptidylproline (omega=0). Functionally, involved in protein export. Acts as a chaperone by maintaining the newly synthesized protein in an open conformation. Functions as a peptidyl-prolyl cis-trans isomerase. The protein is Trigger factor of Sulfurovum sp. (strain NBC37-1).